The primary structure comprises 391 residues: Phosphoglycerate kinase (391 aa).

Substrate is bound by residues 21–23 (DLN), Arg36, 59–62 (HLGR), Arg113, and Arg146. ATP-binding positions include Lys197, Glu319, and 345–348 (GGDT).

It belongs to the phosphoglycerate kinase family. Monomer.

The protein resides in the cytoplasm. It catalyses the reaction (2R)-3-phosphoglycerate + ATP = (2R)-3-phospho-glyceroyl phosphate + ADP. Its pathway is carbohydrate degradation; glycolysis; pyruvate from D-glyceraldehyde 3-phosphate: step 2/5. This chain is Phosphoglycerate kinase, found in Shewanella baltica (strain OS185).